A 412-amino-acid polypeptide reads, in one-letter code: Multidrug resistance protein MdtG (412 aa).

10 consecutive transmembrane segments (helical) span residues 20-40 (LFVA…IMPF), 62-82 (LVFS…GGLA), 96-116 (LGMS…QFLI), 119-139 (ALLG…ATQI), 150-170 (TLST…GLLA), 177-197 (PVFF…LYFI), 225-245 (VLCL…IAPI), 260-280 (LAFI…MSAP), 294-314 (ILVA…LVQT), and 382-402 (TVFF…YWCL).

This sequence belongs to the major facilitator superfamily. DHA1 family. MdtG (TC 2.A.1.2.20) subfamily.

The protein resides in the cell inner membrane. In Rahnella sp. (strain Y9602), this protein is Multidrug resistance protein MdtG.